The primary structure comprises 612 residues: Chaperone protein DnaK (612 aa).

Phosphothreonine; by autocatalysis is present on Thr-174. Residues 579–612 are disordered; that stretch reads GSAGTGAGSQAGSAAGSGDGQSMDAEFKVKDEDK. Residues 581 to 597 show a composition bias toward gly residues; the sequence is AGTGAGSQAGSAAGSGD. Positions 603–612 are enriched in basic and acidic residues; it reads AEFKVKDEDK.

It belongs to the heat shock protein 70 family.

Functionally, acts as a chaperone. This chain is Chaperone protein DnaK, found in Symbiobacterium thermophilum (strain DSM 24528 / JCM 14929 / IAM 14863 / T).